Consider the following 300-residue polypeptide: uncharacterized protein (300 aa).

The segment at leucine 230–arginine 251 is disordered. The span at arginine 231–arginine 251 shows a compositional bias: low complexity.

This is an uncharacterized protein from Acanthamoeba polyphaga (Amoeba).